A 167-amino-acid polypeptide reads, in one-letter code: Iron-sulfur cluster assembly protein 1 (167 aa).

Residues 1 to 50 constitute a mitochondrion transit peptide; it reads MMLKQAAKKALGLTSRQSTPWSVGILRTYHENVIDHYDNPRNVGSFDKND.

This sequence belongs to the NifU family. Component of the core Fe-S cluster (ISC) assembly machinery. Interacts with HSCB. Requires [2Fe-2S] cluster as cofactor. Expressed in roots, stems, leaves, flowers, pollen and siliques.

It is found in the mitochondrion matrix. The protein localises to the cytoplasm. The protein resides in the cytosol. The protein operates within cofactor biosynthesis; iron-sulfur cluster biosynthesis. Functionally, scaffold protein for the de novo synthesis of iron-sulfur (Fe-S) clusters within mitochondria, which is required for maturation of both mitochondrial and cytoplasmic [2Fe-2S] and [4Fe-4S] proteins. First, a [2Fe-2S] cluster is transiently assembled on the scaffold protein ISCU (ISU1, ISU2 or ISU3). In a second step, the cluster is released from ISCU, transferred to a glutaredoxin, followed by the formation of mitochondrial [2Fe-2S] proteins, the synthesis of [4Fe-4S] clusters and their target-specific insertion into the recipient apoproteins. Cluster assembly on ISCU depends on the function of the cysteine desulfurase complex NFS1-ISD11, which serves as the sulfur donor for cluster synthesis, the iron-binding protein frataxin as the putative iron donor, and the electron transfer chain comprised of ferredoxin reductase and ferredoxin, which receive their electrons from NADH. This Arabidopsis thaliana (Mouse-ear cress) protein is Iron-sulfur cluster assembly protein 1 (ISU1).